Consider the following 257-residue polypeptide: Acetylglutamate kinase (257 aa).

Substrate contacts are provided by residues G43–G44, R65, and N157. ATP contacts are provided by residues D180 to L185 and I208 to T210.

This sequence belongs to the acetylglutamate kinase family. ArgB subfamily. Homodimer.

It is found in the cytoplasm. It carries out the reaction N-acetyl-L-glutamate + ATP = N-acetyl-L-glutamyl 5-phosphate + ADP. It functions in the pathway amino-acid biosynthesis; L-arginine biosynthesis; N(2)-acetyl-L-ornithine from L-glutamate: step 2/4. Catalyzes the ATP-dependent phosphorylation of N-acetyl-L-glutamate. In Klebsiella pneumoniae (strain 342), this protein is Acetylglutamate kinase.